Consider the following 872-residue polypeptide: Alanine--tRNA ligase (872 aa).

Residues His567, His571, Cys669, and His673 each coordinate Zn(2+).

This sequence belongs to the class-II aminoacyl-tRNA synthetase family. Zn(2+) serves as cofactor.

The protein localises to the cytoplasm. It carries out the reaction tRNA(Ala) + L-alanine + ATP = L-alanyl-tRNA(Ala) + AMP + diphosphate. In terms of biological role, catalyzes the attachment of alanine to tRNA(Ala) in a two-step reaction: alanine is first activated by ATP to form Ala-AMP and then transferred to the acceptor end of tRNA(Ala). Also edits incorrectly charged Ser-tRNA(Ala) and Gly-tRNA(Ala) via its editing domain. This chain is Alanine--tRNA ligase, found in Streptococcus pyogenes serotype M5 (strain Manfredo).